An 804-amino-acid chain; its full sequence is Exo-1,4-beta-xylosidase xlnD (804 aa).

The first 26 residues, 1–26, serve as a signal peptide directing secretion; the sequence is MAHSMSRPVAATAAALLALALPQALA. N-linked (GlcNAc...) asparagine glycosylation is found at Asn-29, Asn-124, Asn-148, Asn-242, and Asn-251. Asp-315 is an active-site residue. 9 N-linked (GlcNAc...) asparagine glycosylation sites follow: Asn-357, Asn-390, Asn-413, Asn-444, Asn-455, Asn-573, Asn-665, Asn-696, and Asn-718.

The protein belongs to the glycosyl hydrolase 3 family.

The protein resides in the secreted. It catalyses the reaction Hydrolysis of (1-&gt;4)-beta-D-xylans, to remove successive D-xylose residues from the non-reducing termini.. It participates in glycan degradation; xylan degradation. Xylan 1,4-beta-xylosidase involved in the hydrolysis of xylan, a major structural heterogeneous polysaccharide found in plant biomass representing the second most abundant polysaccharide in the biosphere, after cellulose. The protein is Exo-1,4-beta-xylosidase xlnD (xlnD) of Aspergillus awamori (Black koji mold).